The sequence spans 237 residues: tRNA (guanine-N(1)-)-methyltransferase (237 aa).

S-adenosyl-L-methionine is bound by residues G113 and 133–138; that span reads MGDYIL.

This sequence belongs to the RNA methyltransferase TrmD family. As to quaternary structure, homodimer.

It is found in the cytoplasm. It carries out the reaction guanosine(37) in tRNA + S-adenosyl-L-methionine = N(1)-methylguanosine(37) in tRNA + S-adenosyl-L-homocysteine + H(+). In terms of biological role, specifically methylates guanosine-37 in various tRNAs. The sequence is that of tRNA (guanine-N(1)-)-methyltransferase from Wolinella succinogenes (strain ATCC 29543 / DSM 1740 / CCUG 13145 / JCM 31913 / LMG 7466 / NCTC 11488 / FDC 602W) (Vibrio succinogenes).